The primary structure comprises 637 residues: 1-deoxy-D-xylulose-5-phosphate synthase (637 aa).

Thiamine diphosphate is bound by residues H74 and 115–117; that span reads GHS. D146 lines the Mg(2+) pocket. Thiamine diphosphate-binding positions include 147–148, N175, Y285, and E366; that span reads GA. N175 contributes to the Mg(2+) binding site.

This sequence belongs to the transketolase family. DXPS subfamily. Homodimer. Requires Mg(2+) as cofactor. It depends on thiamine diphosphate as a cofactor.

The catalysed reaction is D-glyceraldehyde 3-phosphate + pyruvate + H(+) = 1-deoxy-D-xylulose 5-phosphate + CO2. It participates in metabolic intermediate biosynthesis; 1-deoxy-D-xylulose 5-phosphate biosynthesis; 1-deoxy-D-xylulose 5-phosphate from D-glyceraldehyde 3-phosphate and pyruvate: step 1/1. Its function is as follows. Catalyzes the acyloin condensation reaction between C atoms 2 and 3 of pyruvate and glyceraldehyde 3-phosphate to yield 1-deoxy-D-xylulose-5-phosphate (DXP). This chain is 1-deoxy-D-xylulose-5-phosphate synthase, found in Pelotomaculum thermopropionicum (strain DSM 13744 / JCM 10971 / SI).